The chain runs to 89 residues: Large ribosomal subunit protein bL31B (89 aa).

Belongs to the bacterial ribosomal protein bL31 family. Type B subfamily. As to quaternary structure, part of the 50S ribosomal subunit.

The protein is Large ribosomal subunit protein bL31B of Aeromonas salmonicida (strain A449).